Here is a 353-residue protein sequence, read N- to C-terminus: tRNA N6-adenosine threonylcarbamoyltransferase (353 aa).

Positions 109 and 113 each coordinate Fe cation. Substrate contacts are provided by residues 136–140 (TVSGG), aspartate 169, glycine 182, aspartate 186, and asparagine 284. Aspartate 312 serves as a coordination point for Fe cation.

This sequence belongs to the KAE1 / TsaD family. The cofactor is Fe(2+).

It is found in the cytoplasm. The catalysed reaction is L-threonylcarbamoyladenylate + adenosine(37) in tRNA = N(6)-L-threonylcarbamoyladenosine(37) in tRNA + AMP + H(+). Required for the formation of a threonylcarbamoyl group on adenosine at position 37 (t(6)A37) in tRNAs that read codons beginning with adenine. Is involved in the transfer of the threonylcarbamoyl moiety of threonylcarbamoyl-AMP (TC-AMP) to the N6 group of A37, together with TsaE and TsaB. TsaD likely plays a direct catalytic role in this reaction. This Chlorobium limicola (strain DSM 245 / NBRC 103803 / 6330) protein is tRNA N6-adenosine threonylcarbamoyltransferase.